The chain runs to 85 residues: Beta-defensin 18 (85 aa).

Residues 1-23 (MQSTMKMFGIILMVIFSVSCGPS) form the signal peptide. 3 cysteine pairs are disulfide-bonded: Cys-39/Cys-65, Cys-46/Cys-60, and Cys-50/Cys-66.

It belongs to the beta-defensin family.

Its subcellular location is the secreted. Has antibacterial activity. The chain is Beta-defensin 18 (Defb18) from Mus musculus (Mouse).